Reading from the N-terminus, the 1451-residue chain is DNA excision repair protein ERCC-6-like (1451 aa).

One copy of the TPR 1 repeat lies at 27–60 (YDRYRQKGKEAALNGELPRALELFQLAYQLQPSE). Residues 118–286 (SLYRDGRKGG…WALFDFACQG (169 aa)) enclose the Helicase ATP-binding domain. 131-138 (DDMGLGKT) is a binding site for ATP. Residues 237–240 (DEAH) carry the DEAH box motif. The 161-residue stretch at 479–639 (FVVSLMECLR…PFRYFSKQEL (161 aa)) folds into the Helicase C-terminal domain. 7 disordered regions span residues 647-669 (DTRS…RSDT), 778-804 (NSFD…ETAS), 935-1006 (DDTS…ATTD), 1035-1054 (DEEV…EFQL), 1063-1083 (LEEP…NYND), 1096-1140 (RSTP…LTSS), and 1182-1343 (LLEN…SAEL). Over residues 781–804 (DEPEFEEDEQNLPSAEDAEMETAS) the composition is skewed to acidic residues. Composition is skewed to polar residues over residues 944–964 (SDFN…SPSL) and 992–1002 (QVLSSPLSQHE). Position 961 is a phosphoserine (serine 961). Over residues 1035-1050 (DEEVHEVEESAAEESP) the composition is skewed to acidic residues. Residues 1063-1074 (LEEPSINHDKQN) show a composition bias toward basic and acidic residues. The span at 1121 to 1132 (DTEEEEEEEEES) shows a compositional bias: acidic residues. Residues 1213 to 1230 (VQTSSGDNSKSYETSEAN) are compositionally biased toward polar residues. The segment covering 1244–1278 (YREGKNTSDKVSESNETHSEEFAEEEKPSGDKSES) has biased composition (basic and acidic residues). The span at 1310-1341 (SEADESVVEEEEPSGETLNTEESEMGEEEESA) shows a compositional bias: acidic residues. One copy of the TPR 2 repeat lies at 1402 to 1435 (YNLLVLSGKQSLAEGRKQEALDFFLKAIDINTGD).

This sequence belongs to the SNF2/RAD54 helicase family.

It localises to the chromosome. The protein resides in the centromere. It is found in the kinetochore. The enzyme catalyses ATP + H2O = ADP + phosphate + H(+). In terms of biological role, DNA helicase that acts as a tension sensor that associates with catenated DNA which is stretched under tension until it is resolved during anaphase. Functions as ATP-dependent DNA translocase. Can promote Holliday junction branch migration (in vitro). The polypeptide is DNA excision repair protein ERCC-6-like (ercc6l) (Danio rerio (Zebrafish)).